The following is a 499-amino-acid chain: Sensor histidine kinase VxrA (499 aa).

At 1 to 12 the chain is on the cytoplasmic side; it reads MRYSFCMLEKTN. Residues 13-31 traverse the membrane as a helical segment; it reads IPLIRALNLTLVSLCFAML. The Periplasmic segment spans residues 32–257; sequence PNPVHADSLP…ICWDVEDHSD (226 aa). Cystine bridges form between cysteine 101–cysteine 122 and cysteine 241–cysteine 249. A helical transmembrane segment spans residues 258 to 280; sequence LLRTSMIILVIANIFLVLGWSGY. The Cytoplasmic portion of the chain corresponds to 281–499; it reads RWNSKRQEMR…IPCETDTASR (219 aa). In terms of domain architecture, Histidine kinase spans 298–494; it reads ILTHELRTPI…TFILEIPCET (197 aa). Histidine 301 is subject to Phosphohistidine; by autocatalysis.

Homodimer. Autophosphorylated. Contains two disulfide bonds that may play a role in the stability of the protein. However, the disulfide bonds are not absolutely essential, as some activity and growth are detected in the absence of each disulfide bond.

It is found in the cell inner membrane. It carries out the reaction ATP + protein L-histidine = ADP + protein N-phospho-L-histidine.. In terms of biological role, member of the two-component regulatory system VxrB/VxrA involved in the regulation of diverses processes, including virulence, the type VI secretion system (T6SS) and biofilm formation. Functions as a sensor protein kinase which is autophosphorylated at a histidine residue and transfers its phosphate group to the conserved aspartic acid residue in the regulatory domain of VxrB. Is critical for colonization in the infant mouse model. Contributes to the resistance to beta-lactam treatment. In Vibrio cholerae serotype O1 (strain ATCC 39315 / El Tor Inaba N16961), this protein is Sensor histidine kinase VxrA.